The sequence spans 219 residues: Transmembrane emp24 domain-containing protein 10 (219 aa).

Positions 1 to 31 (MSGLFGPLSRPGPLPSAWLFLLLLGPSSVLG) are cleaved as a signal peptide. Residues 1–142 (MSGLFGPLSR…KNYEEIAKVE (142 aa)) are required for interaction with STX17. The Lumenal portion of the chain corresponds to 32 to 185 (ISFHLPVNSR…RDTNESTNTR (154 aa)). The 153-residue stretch at 41 to 193 (RKCLREEIHK…TRVLYFSIFS (153 aa)) folds into the GOLD domain. Residues 147 to 178 (LEVELRRLEDLSESIVNDFAYMKKREEEMRDT) form a required for TMED10 and TMED2 cis-Golgi network localization region. Residues R171 and R176 each carry the dimethylated arginine modification. Residue N179 is glycosylated (N-linked (GlcNAc...) asparagine). Residues 186-206 (VLYFSIFSMFCLIGLATWQVF) form a helical membrane-spanning segment. The interval 204–219 (QVFYLRRFFKAKKLIE) is interaction with COPG1. The Cytoplasmic segment spans residues 207–219 (YLRRFFKAKKLIE). Positions 207–219 (YLRRFFKAKKLIE) are interaction with ARF1 and IL1B. A COPII vesicle coat-binding motif is present at residues 211-212 (FF). The COPI vesicle coat-binding motif lies at 211–219 (FFKAKKLIE).

It belongs to the EMP24/GP25L family. Predominantly dimeric and to a lesser extent monomeric in the ER. Monomer and dimer in ERGIC and cis-Golgi network. Forms homooligomer (via GOLD domain); the assembly is promoted by direct binding with leaderless cargos and may form a protein channel that facilitates cargo entry into the ERGIC. Forms heterooligomeric complexes with other members of the p24 family such as TMED2, TMED7 and TMED9. Interacts (via GOLD domain) with TMED2 (via GOLD domain); the complex is required for export of TMED10 from the ER to the cis-Golgi network; the complex is proposed to be involved in cis-Golgi network dynamics and / or biogenesis. Associates with the COPI vesicle coat subunits (coatomer). Tetramerization of the cytoplasmic domain at the Golgi membrane in vitro; the complex is proposed to interact with COPI coatomer and induce budding of the vesicles. Interacts with COPG1; the interaction involves TMED10 homodimer. Interacts with ARF1 (GDP-bound); the interaction probably involves a TMED10 oligomer. Interacts with SEC23A, SEC24B, SEC24C and SEC24D components of the coat protein complex II/COPII, indicative of an association of TMED10 with the COPII vesicle coat. Interacts with CD59. Interacts with MPPE1/PGAP5; the complex might recruit and sort GPI-anchored proteins to the ER-exit site, or the interaction might lead to recycling of PGAP5 between the ER and the Golgi. Interacts with F2LR1/PAR2. Interacts with KDELR2/ERD2; the interaction is disrupted by KDELR2 ligand. Found in a complex composed at least of SURF4, TMED2 and TMED10. Associates with the presenilin-dependent gamma-secretase complex. Interacts with STX17; the interaction is direct. Interacts with IL-1; the interaction is direct. Interacts with RAB21 (active GTP-bound form); the interaction is indirect and regulates TMED10 abundance and localization at the Golgi.

The protein localises to the endoplasmic reticulum membrane. It is found in the endoplasmic reticulum-Golgi intermediate compartment membrane. The protein resides in the golgi apparatus membrane. Its subcellular location is the golgi apparatus. It localises to the cis-Golgi network membrane. The protein localises to the trans-Golgi network membrane. It is found in the cytoplasmic vesicle. The protein resides in the secretory vesicle membrane. Its subcellular location is the cell membrane. It localises to the melanosome. Cargo receptor involved in protein vesicular trafficking and quality control in the endoplasmic reticulum (ER) and Golgi. The p24 protein family is a group of transmembrane proteins that bind coat protein complex I/COPI and coat protein complex II/COPII involved in vesicular trafficking between the membranes. Acts at the lumenal side for incorporation of secretory cargo molecules into transport vesicles and involved in vesicle coat formation at the cytoplasmic side. Mainly functions in the early secretory pathway and cycles between the ER, ER-Golgi intermediate compartment (ERGIC) and Golgi, mediating cargo transport through COPI and COPII-coated vesicles. In COPII vesicle-mediated anterograde transport, involved in the transport of GPI-anchored proteins by acting together with TMED2 as their cargo receptor; the function specifically implies SEC24C and SEC24D of the COPII vesicle coat and lipid raft-like microdomains of the ER. Recognizes GPI anchors structural remodeled in the ER by the GPI inositol-deacylase/PGAP1 and the metallophosphoesterase MPPE1/PGAP5. In COPI vesicle-mediated retrograde transport, involved in the biogenesis of COPI vesicles and vesicle coat recruitment. Involved in trafficking of amyloid beta A4 protein and soluble APP-beta release (independent from the modulation of gamma-secretase activity). Involved in the KDELR2-mediated retrograde transport of the toxin A subunit (CTX-A-K63)together with COPI and the COOH terminus of KDELR2. On Golgi membranes, acts as a primary receptor for ARF1-GDP, a GTP-binding protein involved in COPI-vesicle formation. Increases coatomer-dependent GTPase-activating activity of ARFGAP2 which mediates the hydrolysis of ARF1-bound GTP and therefore modulates protein trafficking from the Golgi apparatus. Involved in the exocytic trafficking of G protein-coupled receptors F2LR1/PAR2 (trypsin and tryspin-like enzyme receptor), OPRM1 (opioid receptor) and P2RY4 (UTD and UDP receptor) from the Golgi to the plasma membrane, thus contributing to receptor resensitization. In addition to its cargo receptor activity, may also act as a protein channel after oligomerization, facilitating the post-translational entry of leaderless cytoplasmic cargo into the ERGIC. Involved in the translocation into ERGIC, the vesicle entry and the secretion of leaderless cargos (lacking the secretion signal sequence), including the mature form of interleukin 1/IL-1 family members, the alpha-crystallin B chain HSPB5, the carbohydrate-binding proteins galectin-1/LGALS1 and galectin-3/LGALS3, the microtubule-associated protein Tau/MAPT, and the annexin A1/ANXA1; the translocation process is dependent on cargo protein unfolding and enhanced by chaperones HSP90AB1 and HSP90B1/GRP9. Could also associates with the presenilin-dependent gamma-secretase complex in order to regulate gamma-cleavages of the amyloid beta A4 protein to yield amyloid-beta 40/Abeta40. In Mus musculus (Mouse), this protein is Transmembrane emp24 domain-containing protein 10.